A 2471-amino-acid polypeptide reads, in one-letter code: Probable polyketide synthase 24 (2471 aa).

The Ketosynthase family 3 (KS3) domain maps to 21-449 (ENLVAIVGVG…GSNCCLVLSQ (429 aa)). Residues Cys-190, His-332, and His-372 each act as for beta-ketoacyl synthase activity in the active site. Residues 654–687 (GIKASFMLGHSLGEVTTAYCSGMIDIDQLCYLIY) are acyl/malonyl transferase. Ser-664 (for acyl/malonyl transferase activity) is an active-site residue. The interval 953-1075 (ISILGNSMQD…SNFHLNSNDN (123 aa)) is N-terminal hotdog fold. The PKS/mFAS DH domain maps to 953-1245 (ISILGNSMQD…VKSLTPVKDP (293 aa)). The active-site Proton acceptor; for dehydratase activity is the His-987. The C-terminal hotdog fold stretch occupies residues 1094-1245 (NLSSIPWDEF…VKSLTPVKDP (152 aa)). Asp-1157 serves as the catalytic Proton donor; for dehydratase activity. The stretch at 1426-1469 (IINEQQQQQQQQQQQQQQQQQQQQQLLNNENNKESLKNLLVNCN) forms a coiled coil. Positions 2336-2413 (SSSTNVKNKF…MVYQIINDSL (78 aa)) constitute a Carrier domain. O-(pantetheine 4'-phosphoryl)serine is present on Ser-2373.

The cofactor is pantetheine 4'-phosphate.

Functionally, probable polyketide synthase. The polypeptide is Probable polyketide synthase 24 (pks24) (Dictyostelium discoideum (Social amoeba)).